We begin with the raw amino-acid sequence, 131 residues long: Profilin-2 (131 aa).

It belongs to the profilin family. As to quaternary structure, occurs in many kinds of cells as a complex with monomeric actin in a 1:1 ratio.

It is found in the cytoplasm. The protein resides in the cytoskeleton. Its function is as follows. Binds to actin and affects the structure of the cytoskeleton. At high concentrations, profilin prevents the polymerization of actin, whereas it enhances it at low concentrations. By binding to PIP2, it inhibits the formation of IP3 and DG. In Triticum aestivum (Wheat), this protein is Profilin-2 (PRO2).